Reading from the N-terminus, the 95-residue chain is ESAT-6-like protein EsxC (95 aa).

Belongs to the WXG100 family. ESAT-6 subfamily.

It localises to the secreted. The chain is ESAT-6-like protein EsxC from Mycobacterium tuberculosis (strain CDC 1551 / Oshkosh).